Consider the following 623-residue polypeptide: tRNA uridine 5-carboxymethylaminomethyl modification enzyme MnmG (623 aa).

Glycine 12–glycine 17 lines the FAD pocket. Residue glycine 272–phenylalanine 286 coordinates NAD(+).

Belongs to the MnmG family. Homodimer. Heterotetramer of two MnmE and two MnmG subunits. Requires FAD as cofactor.

The protein localises to the cytoplasm. Its function is as follows. NAD-binding protein involved in the addition of a carboxymethylaminomethyl (cmnm) group at the wobble position (U34) of certain tRNAs, forming tRNA-cmnm(5)s(2)U34. The chain is tRNA uridine 5-carboxymethylaminomethyl modification enzyme MnmG from Flavobacterium johnsoniae (strain ATCC 17061 / DSM 2064 / JCM 8514 / BCRC 14874 / CCUG 350202 / NBRC 14942 / NCIMB 11054 / UW101) (Cytophaga johnsonae).